The primary structure comprises 465 residues: UDP-N-acetylmuramate--L-alanine ligase (465 aa).

112–118 (GTHGKTT) contributes to the ATP binding site.

This sequence belongs to the MurCDEF family.

It localises to the cytoplasm. It carries out the reaction UDP-N-acetyl-alpha-D-muramate + L-alanine + ATP = UDP-N-acetyl-alpha-D-muramoyl-L-alanine + ADP + phosphate + H(+). It participates in cell wall biogenesis; peptidoglycan biosynthesis. In terms of biological role, cell wall formation. In Burkholderia multivorans (strain ATCC 17616 / 249), this protein is UDP-N-acetylmuramate--L-alanine ligase.